A 504-amino-acid polypeptide reads, in one-letter code: Sperm motility kinase 3A (504 aa).

The 249-residue stretch at 28-276 (YVMLETIGHG…VAEVMVHPWV (249 aa)) folds into the Protein kinase domain. ATP is bound by residues 34 to 42 (IGHGGCATV) and Lys57. Catalysis depends on Asp147, which acts as the Proton acceptor. Residues 294–334 (KPDPAIVKAMGHIGFQAQDIEDSLRQRKFNQTMASYCLLKK) enclose the UBA domain. 2 disordered regions span residues 389 to 421 (VCGKSTSKKRDRRVSWPSVLGRPRHTAPTMDHT) and 441 to 468 (NSSEESTQGHTRASAADKPVHSRGWPRG). Over residues 441–451 (NSSEESTQGHT) the composition is skewed to polar residues.

It belongs to the protein kinase superfamily. CAMK Ser/Thr protein kinase family. Smok subfamily. In terms of tissue distribution, testis-specific. Expressed in the testis from 22 days postpartum (22 dpp).

The catalysed reaction is L-seryl-[protein] + ATP = O-phospho-L-seryl-[protein] + ADP + H(+). It catalyses the reaction L-threonyl-[protein] + ATP = O-phospho-L-threonyl-[protein] + ADP + H(+). Its function is as follows. May play a role in sperm motility, especially in the regulation of flagellar function. This chain is Sperm motility kinase 3A, found in Mus musculus (Mouse).